We begin with the raw amino-acid sequence, 165 residues long: Large ribosomal subunit protein uL10 (165 aa).

It belongs to the universal ribosomal protein uL10 family. In terms of assembly, part of the ribosomal stalk of the 50S ribosomal subunit. The N-terminus interacts with L11 and the large rRNA to form the base of the stalk. The C-terminus forms an elongated spine to which L12 dimers bind in a sequential fashion forming a multimeric L10(L12)X complex.

Its function is as follows. Forms part of the ribosomal stalk, playing a central role in the interaction of the ribosome with GTP-bound translation factors. In Halalkalibacterium halodurans (strain ATCC BAA-125 / DSM 18197 / FERM 7344 / JCM 9153 / C-125) (Bacillus halodurans), this protein is Large ribosomal subunit protein uL10 (rplJ).